A 351-amino-acid polypeptide reads, in one-letter code: CREB homolog crh-2 (351 aa).

Disordered regions lie at residues E46 to G104 and S119 to Q149. Residues G82–P95 show a composition bias toward low complexity. The 64-residue stretch at S282–Y345 folds into the bZIP domain. Positions K284 to K304 are basic motif. The interval I307–L314 is leucine-zipper.

This sequence belongs to the bZIP family.

The protein localises to the nucleus. Its function is as follows. Transcription factor. Plays a role in regulating the developmentally arrested larval state known as dauer, when induced by long-term exposure to the Gram-negative bacterium P.aeruginosa PAO1, but dispensable for dauer formation induced by starvation. Involved in regulating expression of microRNA mir-243, during long-term exposure to P.aeruginosa PAO1. This chain is CREB homolog crh-2, found in Caenorhabditis elegans.